Reading from the N-terminus, the 580-residue chain is 2-succinyl-5-enolpyruvyl-6-hydroxy-3-cyclohexene-1-carboxylate synthase (580 aa).

This sequence belongs to the TPP enzyme family. MenD subfamily. In terms of assembly, homodimer. It depends on Mg(2+) as a cofactor. The cofactor is Mn(2+). Thiamine diphosphate serves as cofactor.

It carries out the reaction isochorismate + 2-oxoglutarate + H(+) = 5-enolpyruvoyl-6-hydroxy-2-succinyl-cyclohex-3-ene-1-carboxylate + CO2. It functions in the pathway quinol/quinone metabolism; 1,4-dihydroxy-2-naphthoate biosynthesis; 1,4-dihydroxy-2-naphthoate from chorismate: step 2/7. The protein operates within quinol/quinone metabolism; menaquinone biosynthesis. In terms of biological role, catalyzes the thiamine diphosphate-dependent decarboxylation of 2-oxoglutarate and the subsequent addition of the resulting succinic semialdehyde-thiamine pyrophosphate anion to isochorismate to yield 2-succinyl-5-enolpyruvyl-6-hydroxy-3-cyclohexene-1-carboxylate (SEPHCHC). The polypeptide is 2-succinyl-5-enolpyruvyl-6-hydroxy-3-cyclohexene-1-carboxylate synthase (Listeria monocytogenes serovar 1/2a (strain ATCC BAA-679 / EGD-e)).